The following is a 335-amino-acid chain: Tetraacyldisaccharide 4'-kinase (335 aa).

Residue 59 to 66 (TAGGNGKT) coordinates ATP.

It belongs to the LpxK family.

The catalysed reaction is a lipid A disaccharide + ATP = a lipid IVA + ADP + H(+). It participates in glycolipid biosynthesis; lipid IV(A) biosynthesis; lipid IV(A) from (3R)-3-hydroxytetradecanoyl-[acyl-carrier-protein] and UDP-N-acetyl-alpha-D-glucosamine: step 6/6. Transfers the gamma-phosphate of ATP to the 4'-position of a tetraacyldisaccharide 1-phosphate intermediate (termed DS-1-P) to form tetraacyldisaccharide 1,4'-bis-phosphate (lipid IVA). This is Tetraacyldisaccharide 4'-kinase from Vibrio parahaemolyticus serotype O3:K6 (strain RIMD 2210633).